The chain runs to 176 residues: PKHD-type hydroxylase Mfla_0096 (176 aa).

The Fe2OG dioxygenase domain occupies 78 to 147 (KVFPPLFNRY…NQIARGTYGA (70 aa)).

Requires Fe(2+) as cofactor. It depends on L-ascorbate as a cofactor.

This is PKHD-type hydroxylase Mfla_0096 from Methylobacillus flagellatus (strain ATCC 51484 / DSM 6875 / VKM B-1610 / KT).